The sequence spans 173 residues: C-phycocyanin beta subunit (173 aa).

At N73 the chain carries N4-methylasparagine. (2R,3E)-phycocyanobilin-binding residues include C83 and C154.

Belongs to the phycobiliprotein family. Heterodimer of an alpha and a beta subunit. Part of 2 PBS rod complexes, the conventional PBS rod and a photosystem I-specific CpcL-PBS rod. Post-translationally, contains two covalently linked bilin chromophores.

The protein localises to the cellular thylakoid membrane. Light-harvesting photosynthetic bile pigment-protein from the phycobiliprotein complex (phycobilisome, PBS). Phycocyanin is the major phycobiliprotein in the PBS rod. In Nostoc sp. (strain PCC 7120 / SAG 25.82 / UTEX 2576), this protein is C-phycocyanin beta subunit (cpcB).